The chain runs to 486 residues: Protein DETOXIFICATION 53 (486 aa).

12 helical membrane-spanning segments follow: residues 15–35 (CPIV…MWFL), 45–65 (GGAL…KGLS), 94–114 (LLIV…PIFL), 130–150 (MLFF…RTFL), 159–179 (LTIS…VFVV), 187–207 (GVAI…LVYT), 240–260 (AISV…CGLL), 267–287 (VAAM…PFAI), 312–332 (VIGL…VTAL), 346–366 (ILGL…GNSP), 386–406 (VNLC…TFGF), and 413–433 (LWFG…YTLI). The disordered stretch occupies residues 448 to 474 (TSAAADKSHSEDETVHAEVQDDDDVSS). Basic and acidic residues predominate over residues 453–466 (DKSHSEDETVHAEV).

This sequence belongs to the multi antimicrobial extrusion (MATE) (TC 2.A.66.1) family.

It is found in the membrane. The sequence is that of Protein DETOXIFICATION 53 from Arabidopsis thaliana (Mouse-ear cress).